The following is a 345-amino-acid chain: S-adenosylmethionine:tRNA ribosyltransferase-isomerase (345 aa).

The protein belongs to the QueA family. In terms of assembly, monomer.

The protein localises to the cytoplasm. The enzyme catalyses 7-aminomethyl-7-carbaguanosine(34) in tRNA + S-adenosyl-L-methionine = epoxyqueuosine(34) in tRNA + adenine + L-methionine + 2 H(+). Its pathway is tRNA modification; tRNA-queuosine biosynthesis. Functionally, transfers and isomerizes the ribose moiety from AdoMet to the 7-aminomethyl group of 7-deazaguanine (preQ1-tRNA) to give epoxyqueuosine (oQ-tRNA). This Shewanella oneidensis (strain ATCC 700550 / JCM 31522 / CIP 106686 / LMG 19005 / NCIMB 14063 / MR-1) protein is S-adenosylmethionine:tRNA ribosyltransferase-isomerase.